Consider the following 275-residue polypeptide: MEMO1 family protein Nmar_0215 (275 aa).

This sequence belongs to the MEMO1 family.

The protein is MEMO1 family protein Nmar_0215 of Nitrosopumilus maritimus (strain SCM1).